The sequence spans 272 residues: HMP-PP phosphatase (272 aa).

Asp8 functions as the Nucleophile in the catalytic mechanism. Positions 8, 10, and 212 each coordinate Mg(2+).

It belongs to the HAD-like hydrolase superfamily. Cof family. Mg(2+) serves as cofactor.

It carries out the reaction 4-amino-2-methyl-5-(diphosphooxymethyl)pyrimidine + H2O = 4-amino-2-methyl-5-(phosphooxymethyl)pyrimidine + phosphate + H(+). Functionally, catalyzes the hydrolysis of 4-amino-2-methyl-5-hydroxymethylpyrimidine pyrophosphate (HMP-PP) to 4-amino-2-methyl-5-hydroxymethylpyrimidine phosphate (HMP-P). This chain is HMP-PP phosphatase, found in Salmonella choleraesuis (strain SC-B67).